The sequence spans 671 residues: Probable potassium transport system protein Kup 2 (671 aa).

A run of 12 helical transmembrane segments spans residues 18 to 38, 60 to 80, 103 to 123, 149 to 169, 173 to 193, 218 to 238, 252 to 272, 292 to 312, 343 to 363, 373 to 393, 402 to 422, and 424 to 444; these read GFLI…LYAM, VSLV…LIAL, WLIV…ALTP, VTTL…ASLV, FGPI…INSF, AGFF…ALYS, WPFV…WLLA, MVIY…QALI, LYIP…VLYF, YSLA…YFLI, IAFI…ASLV, and FING…VMFI.

Belongs to the HAK/KUP transporter (TC 2.A.72) family.

It is found in the cell membrane. It carries out the reaction K(+)(in) + H(+)(in) = K(+)(out) + H(+)(out). Functionally, transport of potassium into the cell. Likely operates as a K(+):H(+) symporter. This is Probable potassium transport system protein Kup 2 from Lactococcus lactis subsp. cremoris (strain SK11).